Reading from the N-terminus, the 373-residue chain is MPSFSPTLLKLAAAALSALLLSGVAASATSRIKDLANIEGVRQNQLIGYGLVVGLNGTGDTLNNIPFTKQSLQAMLERMGVNIRGATIRTGNVAAVMVTGNLPAFATQGTRMDVTVSALGDAKNLQGGTLLVTPLLGADGNVYAVAQGSLAIGGFQAEGEAAKITRGVPTVGRIANGAIIEREIEFALNRLPNVRLALRNADFTTAKRIAAAVNDFLGTKSAEPIDPSTVQLSIPAEFKGNAVAFLTEIEQLQVEPDQAAKIIIDERSGIIVMGRDVRVATVAVAQGNLTVSISESPQVSQPNPLSRGRTTVTPNSRIGVTEDGKKLALVKDGVSLQQLVDGLNGLGIGPRDLIGILQAIKAAGAIEADIEVM.

A signal peptide spans 1–27 (MPSFSPTLLKLAAAALSALLLSGVAAS).

It belongs to the FlgI family. The basal body constitutes a major portion of the flagellar organelle and consists of four rings (L,P,S, and M) mounted on a central rod.

The protein resides in the periplasm. The protein localises to the bacterial flagellum basal body. Its function is as follows. Assembles around the rod to form the L-ring and probably protects the motor/basal body from shearing forces during rotation. This chain is Flagellar P-ring protein, found in Rhodopseudomonas palustris (strain BisB5).